The following is a 283-amino-acid chain: Protein boule-like (283 aa).

A disordered region spans residues Met1–Pro25. The 78-residue stretch at Asn33–Arg110 folds into the RRM domain. In terms of domain architecture, DAZ spans Pro160–Gln184.

This sequence belongs to the RRM DAZ family. In terms of assembly, interacts with DAZ1 and DAZL. Testis specific. Not expressed in early embryos, primordial germ cells and spermatogonial cells. First expressed in the cytoplasm of spermatocytes and then persists through meiosis.

The protein resides in the cytoplasm. Its function is as follows. Probable RNA-binding protein, which may be required during spermatogenesis. May act by binding to the 3'-UTR of mRNAs and regulating their translation. In Homo sapiens (Human), this protein is Protein boule-like (BOLL).